The sequence spans 317 residues: Ribonuclease Z (317 aa).

Zn(2+)-binding residues include histidine 63, histidine 65, aspartate 67, histidine 68, histidine 143, aspartate 213, and histidine 273. Aspartate 67 serves as the catalytic Proton acceptor.

Belongs to the RNase Z family. In terms of assembly, homodimer. Zn(2+) is required as a cofactor.

It catalyses the reaction Endonucleolytic cleavage of RNA, removing extra 3' nucleotides from tRNA precursor, generating 3' termini of tRNAs. A 3'-hydroxy group is left at the tRNA terminus and a 5'-phosphoryl group is left at the trailer molecule.. Its function is as follows. Zinc phosphodiesterase, which displays some tRNA 3'-processing endonuclease activity. Probably involved in tRNA maturation, by removing a 3'-trailer from precursor tRNA. The chain is Ribonuclease Z from Methanocaldococcus jannaschii (strain ATCC 43067 / DSM 2661 / JAL-1 / JCM 10045 / NBRC 100440) (Methanococcus jannaschii).